Consider the following 109-residue polypeptide: RYamide neuropeptides (109 aa).

An N-terminal signal peptide occupies residues 1–22 (MNECVNKLLHLKFLFYFILGIQ). The residue at position 33 (tyrosine 33) is a Tyrosine amide. Positions 36 to 53 (STTYDESLKSRRIFIVPR) are excised as a propeptide. Tyrosine amide is present on tyrosine 63. The propeptide occupies 67–109 (SGKYLCLSREINKLIVRKRLRNNDKERTPTLSFITKHFLMRNT).

Its subcellular location is the secreted. Its function is as follows. Neuropeptides RYamide-1 and RYamide-2 are ligands for the G-protein coupled receptor RYa-R. May suppress feeding behavior. This Drosophila melanogaster (Fruit fly) protein is RYamide neuropeptides.